The following is a 237-amino-acid chain: Phosphoribosylaminoimidazole-succinocarboxamide synthase (237 aa).

It belongs to the SAICAR synthetase family.

The catalysed reaction is 5-amino-1-(5-phospho-D-ribosyl)imidazole-4-carboxylate + L-aspartate + ATP = (2S)-2-[5-amino-1-(5-phospho-beta-D-ribosyl)imidazole-4-carboxamido]succinate + ADP + phosphate + 2 H(+). Its pathway is purine metabolism; IMP biosynthesis via de novo pathway; 5-amino-1-(5-phospho-D-ribosyl)imidazole-4-carboxamide from 5-amino-1-(5-phospho-D-ribosyl)imidazole-4-carboxylate: step 1/2. This chain is Phosphoribosylaminoimidazole-succinocarboxamide synthase, found in Shigella boydii serotype 4 (strain Sb227).